The primary structure comprises 127 residues: Fluoride-specific ion channel FluC (127 aa).

The next 4 helical transmembrane spans lie at 4 to 24 (LLLA…FLSM), 35 to 55 (LGTL…LAWF), 71 to 91 (TGFC…VFLL), and 103 to 123 (IAVN…LFSA). Na(+)-binding residues include Gly-75 and Thr-78.

Belongs to the fluoride channel Fluc/FEX (TC 1.A.43) family.

Its subcellular location is the cell inner membrane. It carries out the reaction fluoride(in) = fluoride(out). Na(+) is not transported, but it plays an essential structural role and its presence is essential for fluoride channel function. Fluoride-specific ion channel. Important for reducing fluoride concentration in the cell, thus reducing its toxicity. This Enterobacter sp. (strain 638) protein is Fluoride-specific ion channel FluC.